The chain runs to 334 residues: Ornithine carbamoyltransferase (334 aa).

Carbamoyl phosphate is bound by residues 57–60 (STRT), Gln-84, Arg-108, and 135–138 (HPTQ). Residues Asn-169, Asp-233, and 237 to 238 (SM) each bind L-ornithine. Carbamoyl phosphate is bound by residues 275–276 (CL) and Arg-320.

It belongs to the aspartate/ornithine carbamoyltransferase superfamily. OTCase family.

It localises to the cytoplasm. It catalyses the reaction carbamoyl phosphate + L-ornithine = L-citrulline + phosphate + H(+). Its pathway is amino-acid biosynthesis; L-arginine biosynthesis; L-arginine from L-ornithine and carbamoyl phosphate: step 1/3. In terms of biological role, reversibly catalyzes the transfer of the carbamoyl group from carbamoyl phosphate (CP) to the N(epsilon) atom of ornithine (ORN) to produce L-citrulline. The chain is Ornithine carbamoyltransferase from Vibrio vulnificus (strain YJ016).